The chain runs to 155 residues: WPP domain-containing protein 1 (155 aa).

2 disordered regions span residues 1–41 (MAET…VTIS) and 124–155 (SVKAKSNVASPPPKDGDGIESAVDSKIDSSEA). Low complexity predominate over residues 7–39 (ESITTSSPPPISETENSTTLPTTETEKNPNPVT). Positions 28 to 131 (TTETEKNPNP…LESVKAKSNV (104 aa)) are WPP. Basic and acidic residues predominate over residues 146-155 (VDSKIDSSEA).

In terms of assembly, binds to FPP proteins. Interacts with WAP, WIP1, WIP2 and WIP3 through its WPP domain. Interacts with HSP70-1, HSP70-3 and WIT1. Component of a ternary complex composed of WPP1, HSP70-1 and WIT1. In terms of tissue distribution, expressed in roots, stems and leaves.

It is found in the nucleus envelope. It localises to the cytoplasm. Its subcellular location is the nucleus. The protein localises to the golgi apparatus. The protein resides in the nucleus matrix. Functionally, regulates the mitotic activity in roots. Plays a role with HSP70-1 in facilitating WIT1 nuclear envelope targeting. The sequence is that of WPP domain-containing protein 1 (WPP1) from Arabidopsis thaliana (Mouse-ear cress).